Reading from the N-terminus, the 2798-residue chain is Nipped-B-like protein (2798 aa).

2 stretches are compositionally biased toward polar residues: residues 128 to 173 and 191 to 208; these read LSQN…QNSP and HPSSYTTHPQMQQASVSS. Positions 128–338 are disordered; it reads LSQNSMHSSP…IKLGKDEKDQ (211 aa). Phosphoserine is present on residues Ser-150 and Ser-162. Positions 234–249 are enriched in basic and acidic residues; it reads HHADNPRHGSSDDYLH. A phosphoserine mark is found at Ser-243, Ser-256, Ser-274, Ser-280, Ser-284, Ser-301, Ser-306, Ser-318, and Ser-350. Residues 482–500 are compositionally biased toward basic and acidic residues; it reads RESAIERERFSKEVQDKDK. The disordered stretch occupies residues 482–940; sequence RESAIERERF…NKAEFPSYLL (459 aa). The span at 523-534 shows a compositional bias: polar residues; the sequence is PASQETGSTGNG. Basic and acidic residues-rich tracts occupy residues 562 to 572, 593 to 625, 634 to 663, 672 to 685, and 694 to 899; these read DSIKKPEETKQ, PENHPETPKKKSDPELSKSEMKQNESRLSESKP, KSNESKLETKTETPTEELKQNENKTTESKQ, KQNENRPCDTKPND, and ENTK…DTNK. A phosphothreonine mark is found at Thr-713 and Thr-746. Ser-906 carries the post-translational modification Phosphoserine. The span at 908 to 933 shows a compositional bias: basic and acidic residues; the sequence is NSKDDKRTEGNRSKVDSNKAHTDNKA. A PxVxL motif motif is present at residues 990–1003; it reads NKGAKPVVVLQKLS. Disordered regions lie at residues 1011 to 1041 and 1054 to 1186; these read IKDREEKSRSSLKSIKNKPSKSNKGSIDQSV and ESTM…TPEE. An N6-acetyllysine modification is found at Lys-1076. 3 positions are modified to phosphoserine: Ser-1083, Ser-1084, and Ser-1090. Residues 1083–1094 are compositionally biased toward acidic residues; that stretch reads SSDEDNDSDEAF. Residues 1103–1133 show a composition bias toward basic and acidic residues; that stretch reads KDDDKAWEYEERDRRSSGDHRRSGHSHDGRR. Phosphoserine is present on residues Ser-1144, Ser-1146, and Ser-1148. Tyr-1153 is subject to Phosphotyrosine. Ser-1154 is subject to Phosphoserine. Residues 1165 to 1176 are compositionally biased toward basic residues; the sequence is KMKKKEKQKKRK. Thr-1183 carries the phosphothreonine modification. Position 1191 is a phosphoserine (Ser-1191). A compositionally biased stretch (basic and acidic residues) spans 1685 to 1705; that stretch reads AMKSQKDEESSDATHHAKELE. The tract at residues 1685 to 1706 is disordered; that stretch reads AMKSQKDEESSDATHHAKELET. 5 HEAT repeats span residues 1761–1799, 1837–1875, 1939–1978, 2221–2261, and 2307–2345; these read AQSFDIYLTQILRVLGENAIAVRTKAMKCLSEVVAVDPS, PQLAEQYYDMLIERILDTGISVRKRVIKILRDICIEQPT, YDWFEQLLQNLLKSEEDSSYKPVKKACTQLVDNLVEHILK, VNLK…LKEM, and LIHPVQCVPYLIAMGTDPEPAMRNKADQQLVEIDKKYAG. A compositionally biased stretch (basic and acidic residues) spans 2467–2483; the sequence is VKDKRKERKTSPAKENE. Disordered regions lie at residues 2467 to 2514 and 2645 to 2690; these read VKDK…DDIN and TSLL…DSTE. Phosphoserine occurs at positions 2487, 2503, 2505, 2507, 2509, 2646, and 2652. Over residues 2504–2513 the composition is skewed to acidic residues; it reads ESDSDSEDDI. Position 2661 is a phosphothreonine (Thr-2661). The residue at position 2666 (Ser-2666) is a Phosphoserine.

This sequence belongs to the SCC2/Nipped-B family. As to quaternary structure, heterodimerizes with MAU2/SCC4 to form the cohesin loading complex. The NIPBL-MAU2 heterodimer interacts with the cohesin complex composed of SMC1A/B and SMC3 heterodimer, RAD21 and STAG1/SA1. NIPBL directly contacts all members of the complex, RAD21, SMC1A/B, SMC3 and STAG1. Interacts directly (via PxVxL motif) with CBX3 and CBX5. Interacts with ZNF609 (via N-terminus). Interacts with the multiprotein complex Integrator. Interacts with BRD4. In terms of tissue distribution, spermatocytes and oocytes (at protein level).

It is found in the nucleus. The protein localises to the chromosome. In terms of biological role, plays an important role in the loading of the cohesin complex on to DNA. Forms a heterodimeric complex (also known as cohesin loading complex) with MAU2/SCC4 which mediates the loading of the cohesin complex onto chromatin. Plays a role in cohesin loading at sites of DNA damage. Its recruitment to double-strand breaks (DSBs) sites occurs in a CBX3-, RNF8- and RNF168-dependent manner whereas its recruitment to UV irradiation-induced DNA damage sites occurs in a ATM-, ATR-, RNF8- and RNF168-dependent manner. Along with ZNF609, promotes cortical neuron migration during brain development by regulating the transcription of crucial genes in this process. Preferentially binds promoters containing paused RNA polymerase II. Up-regulates the expression of SEMA3A, NRP1, PLXND1 and GABBR2 genes, among others. The polypeptide is Nipped-B-like protein (Nipbl) (Mus musculus (Mouse)).